We begin with the raw amino-acid sequence, 474 residues long: F420-non-reducing hydrogenase vhc subunit A (474 aa).

Ni(2+)-binding residues include cysteine 61, cysteine 64, cysteine 445, and cysteine 448.

This sequence belongs to the [NiFe]/[NiFeSe] hydrogenase large subunit family. As to quaternary structure, the F420-non-reducing hydrogenase vhc is composed of three subunits; VhcA, VhcD and VhcG. Ni(2+) serves as cofactor.

The polypeptide is F420-non-reducing hydrogenase vhc subunit A (vhcA) (Methanococcus voltae).